The chain runs to 513 residues: Protein indeterminate-domain 11 (513 aa).

The segment at 1–84 (MMNKDMLLHQ…QPGNPDPESE (84 aa)) is disordered. The segment covering 10–45 (QHQQPQQDENMSNLTSASGDQASVSSGNITEASGSN) has biased composition (polar residues). Low complexity predominate over residues 51-60 (QQQQEQQQQQ). Ser89 carries the post-translational modification Phosphoserine. C2H2-type zinc fingers lie at residues 99 to 121 (FVCE…RRGH) and 141 to 171 (YVCP…CRKH). Positions 163–170 (IKKHFCRK) match the Nuclear localization signal motif. The C2H2-type 2; degenerate zinc-finger motif lies at 176 to 199 (WKCDKCSKKYAVQSDCKAHSKTCG). Positions 178, 181, 194, 198, 205, 207, 220, and 224 each coordinate Zn(2+). Residues 203-226 (YRCDCGTLFSRRDSFITHRAFCEA) form a CCHC-type 2; atypical zinc finger. Positions 213-225 (RRDSFITHRAFCE) are SHR-binding. 2 disordered regions span residues 255–280 (ASHP…SHNH) and 334–358 (PQPH…SLFS). The span at 264 to 280 (TQPTINVSSSSSSSHNH) shows a compositional bias: low complexity.

It localises to the nucleus. In terms of biological role, probable transcription factor. In Arabidopsis thaliana (Mouse-ear cress), this protein is Protein indeterminate-domain 11.